Consider the following 316-residue polypeptide: 4-hydroxy-3-methylbut-2-enyl diphosphate reductase (316 aa).

Cysteine 12 serves as a coordination point for [4Fe-4S] cluster. Positions 43 and 81 each coordinate (2E)-4-hydroxy-3-methylbut-2-enyl diphosphate. Dimethylallyl diphosphate is bound by residues histidine 43 and histidine 81. Positions 43 and 81 each coordinate isopentenyl diphosphate. Cysteine 103 contributes to the [4Fe-4S] cluster binding site. Histidine 131 contacts (2E)-4-hydroxy-3-methylbut-2-enyl diphosphate. Position 131 (histidine 131) interacts with dimethylallyl diphosphate. Histidine 131 provides a ligand contact to isopentenyl diphosphate. Glutamate 133 functions as the Proton donor in the catalytic mechanism. Position 170 (threonine 170) interacts with (2E)-4-hydroxy-3-methylbut-2-enyl diphosphate. Cysteine 198 contributes to the [4Fe-4S] cluster binding site. (2E)-4-hydroxy-3-methylbut-2-enyl diphosphate contacts are provided by serine 226, asparagine 228, and serine 271. Dimethylallyl diphosphate contacts are provided by serine 226, asparagine 228, and serine 271. Isopentenyl diphosphate is bound by residues serine 226, asparagine 228, and serine 271.

Belongs to the IspH family. The cofactor is [4Fe-4S] cluster.

The catalysed reaction is isopentenyl diphosphate + 2 oxidized [2Fe-2S]-[ferredoxin] + H2O = (2E)-4-hydroxy-3-methylbut-2-enyl diphosphate + 2 reduced [2Fe-2S]-[ferredoxin] + 2 H(+). It carries out the reaction dimethylallyl diphosphate + 2 oxidized [2Fe-2S]-[ferredoxin] + H2O = (2E)-4-hydroxy-3-methylbut-2-enyl diphosphate + 2 reduced [2Fe-2S]-[ferredoxin] + 2 H(+). The protein operates within isoprenoid biosynthesis; dimethylallyl diphosphate biosynthesis; dimethylallyl diphosphate from (2E)-4-hydroxy-3-methylbutenyl diphosphate: step 1/1. It functions in the pathway isoprenoid biosynthesis; isopentenyl diphosphate biosynthesis via DXP pathway; isopentenyl diphosphate from 1-deoxy-D-xylulose 5-phosphate: step 6/6. Catalyzes the conversion of 1-hydroxy-2-methyl-2-(E)-butenyl 4-diphosphate (HMBPP) into a mixture of isopentenyl diphosphate (IPP) and dimethylallyl diphosphate (DMAPP). Acts in the terminal step of the DOXP/MEP pathway for isoprenoid precursor biosynthesis. This is 4-hydroxy-3-methylbut-2-enyl diphosphate reductase from Bacillus thuringiensis (strain Al Hakam).